A 354-amino-acid chain; its full sequence is Uroporphyrinogen decarboxylase (354 aa).

Residues 27-31, Asp-77, Tyr-154, Ser-209, and His-327 contribute to the substrate site; that span reads RQAGR.

The protein belongs to the uroporphyrinogen decarboxylase family. Homodimer.

It is found in the cytoplasm. The catalysed reaction is uroporphyrinogen III + 4 H(+) = coproporphyrinogen III + 4 CO2. The protein operates within porphyrin-containing compound metabolism; protoporphyrin-IX biosynthesis; coproporphyrinogen-III from 5-aminolevulinate: step 4/4. Functionally, catalyzes the decarboxylation of four acetate groups of uroporphyrinogen-III to yield coproporphyrinogen-III. This chain is Uroporphyrinogen decarboxylase, found in Shewanella piezotolerans (strain WP3 / JCM 13877).